Here is a 576-residue protein sequence, read N- to C-terminus: Arginine--tRNA ligase (576 aa).

Residues 122–132 (PNVAKQMHVGH) carry the 'HIGH' region motif.

Belongs to the class-I aminoacyl-tRNA synthetase family. Monomer.

Its subcellular location is the cytoplasm. It catalyses the reaction tRNA(Arg) + L-arginine + ATP = L-arginyl-tRNA(Arg) + AMP + diphosphate. The sequence is that of Arginine--tRNA ligase from Proteus mirabilis (strain HI4320).